We begin with the raw amino-acid sequence, 490 residues long: Cardiolipin synthase A (490 aa).

2 helical membrane passes run 4 to 24 (YLFT…IIIV) and 39 to 59 (AAWL…WFLL). PLD phosphodiesterase domains follow at residues 220–247 (MDLR…VDPY) and 403–430 (KKGL…DMRS). Active-site residues include H225, K227, D232, H408, K410, and D415.

This sequence belongs to the phospholipase D family. Cardiolipin synthase subfamily. ClsA sub-subfamily.

It localises to the cell membrane. It catalyses the reaction 2 a 1,2-diacyl-sn-glycero-3-phospho-(1'-sn-glycerol) = a cardiolipin + glycerol. Functionally, catalyzes the reversible phosphatidyl group transfer from one phosphatidylglycerol molecule to another to form cardiolipin (CL) (diphosphatidylglycerol) and glycerol. The sequence is that of Cardiolipin synthase A from Buchnera aphidicola subsp. Baizongia pistaciae (strain Bp).